A 427-amino-acid chain; its full sequence is Peptidase B (427 aa).

Mn(2+) contacts are provided by Lys195 and Asp200. Lys207 is a catalytic residue. Mn(2+)-binding residues include Asp218, Asp277, and Glu279. The active site involves Arg281.

It belongs to the peptidase M17 family. As to quaternary structure, homohexamer. The cofactor is Mn(2+).

It localises to the cytoplasm. The catalysed reaction is Release of an N-terminal amino acid, Xaa, from a peptide or arylamide. Xaa is preferably Glu or Asp but may be other amino acids, including Leu, Met, His, Cys and Gln.. In terms of biological role, probably plays an important role in intracellular peptide degradation. In Escherichia coli (strain K12 / MC4100 / BW2952), this protein is Peptidase B.